A 189-amino-acid polypeptide reads, in one-letter code: T-cell surface glycoprotein CD3 epsilon chain (189 aa).

A signal peptide spans M1–Q21. Residues D23–R99 form the Ig-like domain. At D23–D108 the chain is on the extracellular side. An intrachain disulfide couples C42 to C83. Residues L109–S134 traverse the membrane as a helical segment. The Cytoplasmic portion of the chain corresponds to K135–V189. The disordered stretch occupies residues P143–V189. Positions Q157–R174 are NUMB-binding region. The 28-residue stretch at E160–R187 folds into the ITAM domain. Residues R161–P168 are proline-rich sequence. Phosphotyrosine occurs at positions 170 and 181.

The TCR-CD3 complex is composed of a CD3D/CD3E and a CD3G/CD3E heterodimers that preferentially associate with TCRalpha and TCRbeta, respectively, to form TCRalpha/CD3E/CD3G and TCRbeta/CD3G/CD3E trimers. In turn, the hexamer interacts with CD3Z homodimer to form the TCR-CD3 complex. Alternatively, TCRalpha and TCRbeta can be replaced by TCRgamma and TCRdelta. Interacts with CD6. Interacts (via Proline-rich sequence) with NCK1; the interaction is ligand dependent but independent of tyrosine kinase activation. In terms of processing, phosphorylated on Tyr residues after T-cell receptor triggering by LCK in association with CD4/CD8.

The protein localises to the cell membrane. Part of the TCR-CD3 complex present on T-lymphocyte cell surface that plays an essential role in adaptive immune response. When antigen presenting cells (APCs) activate T-cell receptor (TCR), TCR-mediated signals are transmitted across the cell membrane by the CD3 chains CD3D, CD3E, CD3G and CD3Z. All CD3 chains contain immunoreceptor tyrosine-based activation motifs (ITAMs) in their cytoplasmic domain. Upon TCR engagement, these motifs become phosphorylated by Src family protein tyrosine kinases LCK and FYN, resulting in the activation of downstream signaling pathways. In addition of this role of signal transduction in T-cell activation, CD3E plays an essential role in correct T-cell development. Also participates in internalization and cell surface down-regulation of TCR-CD3 complexes via endocytosis sequences present in CD3E cytosolic region. In addition to its role as a TCR coreceptor, it serves as a receptor for ITPRIPL1. Ligand recognition inhibits T-cell activation by promoting interaction with NCK1, which prevents CD3E-ZAP70 interaction and blocks the ERK-NFkB signaling cascade and calcium influx. This Mus musculus (Mouse) protein is T-cell surface glycoprotein CD3 epsilon chain (Cd3e).